A 51-amino-acid polypeptide reads, in one-letter code: Sperm protamine P1 (51 aa).

Belongs to the protamine P1 family. In terms of tissue distribution, testis.

Its subcellular location is the nucleus. It is found in the chromosome. Functionally, protamines substitute for histones in the chromatin of sperm during the haploid phase of spermatogenesis. They compact sperm DNA into a highly condensed, stable and inactive complex. The polypeptide is Sperm protamine P1 (PRM1) (Colobus guereza (Mantled guereza)).